The primary structure comprises 436 residues: Adenylyltransferase and sulfurtransferase UBA4 (436 aa).

ATP contacts are provided by residues G74, D95, 102–106 (SNLHR), K119, and 163–164 (DT). 2 residues coordinate Zn(2+): C205 and C208. C222 acts as the Glycyl thioester intermediate; for adenylyltransferase activity in catalysis. Zn(2+) is bound by residues C283 and C286. Residues 335–434 (NEKDHILIDV…YIDEEDHSYP (100 aa)) form the Rhodanese domain. C393 functions as the Cysteine persulfide intermediate; for sulfurtransferase activity in the catalytic mechanism.

The protein in the N-terminal section; belongs to the HesA/MoeB/ThiF family. UBA4 subfamily. Requires Zn(2+) as cofactor.

Its subcellular location is the cytoplasm. The protein resides in the cytosol. The protein operates within tRNA modification; 5-methoxycarbonylmethyl-2-thiouridine-tRNA biosynthesis. Functionally, plays a central role in 2-thiolation of mcm(5)S(2)U at tRNA wobble positions of cytosolic tRNA(Lys), tRNA(Glu) and tRNA(Gln). Acts by mediating the C-terminal thiocarboxylation of sulfur carrier URM1. Its N-terminus first activates URM1 as acyl-adenylate (-COAMP), then the persulfide sulfur on the catalytic cysteine is transferred to URM1 to form thiocarboxylation (-COSH) of its C-terminus. The reaction probably involves hydrogen sulfide that is generated from the persulfide intermediate and that acts as a nucleophile towards URM1. Subsequently, a transient disulfide bond is formed. Does not use thiosulfate as sulfur donor; NFS1 probably acting as a sulfur donor for thiocarboxylation reactions. Prior mcm(5) tRNA modification by the elongator complex is required for 2-thiolation. May also be involved in protein urmylation. In Vanderwaltozyma polyspora (strain ATCC 22028 / DSM 70294 / BCRC 21397 / CBS 2163 / NBRC 10782 / NRRL Y-8283 / UCD 57-17) (Kluyveromyces polysporus), this protein is Adenylyltransferase and sulfurtransferase UBA4.